A 104-amino-acid chain; its full sequence is Large ribosomal subunit protein uL24 (104 aa).

Belongs to the universal ribosomal protein uL24 family. As to quaternary structure, part of the 50S ribosomal subunit.

One of two assembly initiator proteins, it binds directly to the 5'-end of the 23S rRNA, where it nucleates assembly of the 50S subunit. Its function is as follows. One of the proteins that surrounds the polypeptide exit tunnel on the outside of the subunit. In Sodalis glossinidius (strain morsitans), this protein is Large ribosomal subunit protein uL24.